The following is a 211-amino-acid chain: Redox-sensing transcriptional repressor Rex (211 aa).

A DNA-binding region (H-T-H motif) is located at residues 17 to 56 (LYYRFVSSLKSKGIDRVNSKAISDALQIDSATIRRDFSYF). An NAD(+)-binding site is contributed by 91–96 (GVGNLG).

It belongs to the transcriptional regulatory Rex family. Homodimer.

It localises to the cytoplasm. Functionally, modulates transcription in response to changes in cellular NADH/NAD(+) redox state. The polypeptide is Redox-sensing transcriptional repressor Rex (Staphylococcus aureus (strain Mu3 / ATCC 700698)).